A 189-amino-acid chain; its full sequence is GTP cyclohydrolase 1 (189 aa).

The Zn(2+) site is built by cysteine 76, histidine 79, and cysteine 149.

This sequence belongs to the GTP cyclohydrolase I family. In terms of assembly, toroid-shaped homodecamer, composed of two pentamers of five dimers.

The catalysed reaction is GTP + H2O = 7,8-dihydroneopterin 3'-triphosphate + formate + H(+). Its pathway is cofactor biosynthesis; 7,8-dihydroneopterin triphosphate biosynthesis; 7,8-dihydroneopterin triphosphate from GTP: step 1/1. The protein is GTP cyclohydrolase 1 of Dehalococcoides mccartyi (strain ATCC BAA-2266 / KCTC 15142 / 195) (Dehalococcoides ethenogenes (strain 195)).